Consider the following 201-residue polypeptide: MQTSPLLESLMEALRCLPGVGPKSAQRMAFHLLQRDRSGGMRLAQALTRAMSEIGHCCDCRTFTEEERCTICANARRQQNGQICVVESPADIHAIEQTGQFAGRYFVLMGHLSPLDGIGPMDIGLDRLEERLSQEPISEVILATNPTVEGEATANYIAEICAQYDIAASRIAHGVPVGGELEMVDGTTLSHSIAGRQKIHY.

The C4-type zinc-finger motif lies at 57-72 (CCDCRTFTEEERCTIC). Positions 81–176 (GQICVVESPA…AASRIAHGVP (96 aa)) constitute a Toprim domain.

The protein belongs to the RecR family.

Functionally, may play a role in DNA repair. It seems to be involved in an RecBC-independent recombinational process of DNA repair. It may act with RecF and RecO. The chain is Recombination protein RecR from Proteus mirabilis (strain HI4320).